Here is a 189-residue protein sequence, read N- to C-terminus: MARDVKKRGKPAYTNRRNRQKYLKKKDNKKKLSKSAVPIIKYTWDETKTPRENVRDMGIAFNPNDAVPIAEHRKEIIDAEPIDGVSIVVPKPEKKVTGRKKNEKQAAHIISNLEQQVKEEEEARAGQDRKFRLFHRETELCVYMLARHGEDFQAMTRDPKNLWQYTPKQWAKKIRTHKESEMCKFLETA.

Over residues 1–33 the composition is skewed to basic residues; the sequence is MARDVKKRGKPAYTNRRNRQKYLKKKDNKKKLS. Positions 1 to 34 are disordered; it reads MARDVKKRGKPAYTNRRNRQKYLKKKDNKKKLSK.

This sequence belongs to the NOP16 family.

The protein resides in the nucleus. It localises to the nucleolus. This chain is Nucleolar protein 16, found in Caenorhabditis elegans.